A 130-amino-acid polypeptide reads, in one-letter code: Holo-[acyl-carrier-protein] synthase (130 aa).

Mg(2+) contacts are provided by D8 and E62.

It belongs to the P-Pant transferase superfamily. AcpS family. Mg(2+) serves as cofactor.

It is found in the cytoplasm. It carries out the reaction apo-[ACP] + CoA = holo-[ACP] + adenosine 3',5'-bisphosphate + H(+). Its function is as follows. Transfers the 4'-phosphopantetheine moiety from coenzyme A to a Ser of acyl-carrier-protein. The protein is Holo-[acyl-carrier-protein] synthase of Polynucleobacter asymbioticus (strain DSM 18221 / CIP 109841 / QLW-P1DMWA-1) (Polynucleobacter necessarius subsp. asymbioticus).